The chain runs to 345 residues: MTQQANQTVATISAEALRQSARNIAAAAPKEGDAWRVDDVAALFALPFNDLLFRAQQVHREHFDANTVQLSTLLSIKTGGCEEDCGYCPQSAHHDAGVKAEKLMDLEAVLDAAKAAKANGATRFCMGAAWREPKERHLEPVIDMVREVKAMGLETCVTLGMLKAEQAQRLKDAGLDYYNHNLDTSPEFYGKIITTRTYQDRLDTIGHVREAGINVCCGGIVGMGEAREARAGLIAQLANMDPYPESVPINNLVQVEGTPLAGTEALDPFEFVRTIAVARITMPRAMVRLSAGREAMDEALQALCFMAGANSIFYGEKLLTTGNPQADRDRALLARLDIRAEGYAG.

One can recognise a Radical SAM core domain in the interval 66–293 (NTVQLSTLLS…RAMVRLSAGR (228 aa)). Residues Cys81, Cys85, and Cys88 each contribute to the [4Fe-4S] cluster site. [2Fe-2S] cluster-binding residues include Cys125, Cys156, Cys216, and Arg288.

The protein belongs to the radical SAM superfamily. Biotin synthase family. In terms of assembly, homodimer. Requires [4Fe-4S] cluster as cofactor. The cofactor is [2Fe-2S] cluster.

It catalyses the reaction (4R,5S)-dethiobiotin + (sulfur carrier)-SH + 2 reduced [2Fe-2S]-[ferredoxin] + 2 S-adenosyl-L-methionine = (sulfur carrier)-H + biotin + 2 5'-deoxyadenosine + 2 L-methionine + 2 oxidized [2Fe-2S]-[ferredoxin]. Its pathway is cofactor biosynthesis; biotin biosynthesis; biotin from 7,8-diaminononanoate: step 2/2. Functionally, catalyzes the conversion of dethiobiotin (DTB) to biotin by the insertion of a sulfur atom into dethiobiotin via a radical-based mechanism. This Cupriavidus metallidurans (strain ATCC 43123 / DSM 2839 / NBRC 102507 / CH34) (Ralstonia metallidurans) protein is Biotin synthase.